The following is a 107-amino-acid chain: Protein RnfH (107 aa).

Residues 82–107 (ARRKRAEKAKEEGRANKVTGGRPIER) are disordered.

This sequence belongs to the UPF0125 (RnfH) family.

This Pseudoalteromonas translucida (strain TAC 125) protein is Protein RnfH.